Here is a 134-residue protein sequence, read N- to C-terminus: Phospholipase A2 (134 aa).

The Ca(2+) site is built by Trp8, Gly10, and Gly12. 5 disulfides stabilise this stretch: Cys9/Cys31, Cys30/Cys70, Cys37/Cys63, Cys61/Cys95, and Cys105/Cys113. Residue Asn13 is glycosylated (N-linked (GlcNAc...) asparagine). His34 is an active-site residue. Residue Asp35 coordinates Ca(2+). Asp64 is an active-site residue.

This sequence belongs to the phospholipase A2 family. Group III subfamily. Requires Ca(2+) as cofactor. In terms of tissue distribution, expressed by the venom gland.

It is found in the secreted. The catalysed reaction is a 1,2-diacyl-sn-glycero-3-phosphocholine + H2O = a 1-acyl-sn-glycero-3-phosphocholine + a fatty acid + H(+). In terms of biological role, PLA2 catalyzes the calcium-dependent hydrolysis of the 2-acyl groups in 3-sn-phosphoglycerides. In Apis dorsata (Giant honeybee), this protein is Phospholipase A2.